Reading from the N-terminus, the 1126-residue chain is Protein translocase subunit SecA (1126 aa).

ATP is bound by residues Q175, 193–197, and D694; that span reads GEGKT. The segment at 1060–1126 is disordered; sequence VQEAAPEKHE…KYKNCHGQGL (67 aa). Positions 1064–1080 are enriched in basic and acidic residues; sequence APEKHEDMSRYRTEKTD. C1110, C1112, C1121, and H1122 together coordinate Zn(2+).

The protein belongs to the SecA family. Monomer and homodimer. Part of the essential Sec protein translocation apparatus which comprises SecA, SecYEG and auxiliary proteins SecDF. Other proteins may also be involved. Zn(2+) serves as cofactor.

It is found in the cell inner membrane. It localises to the cytoplasm. It catalyses the reaction ATP + H2O + cellular proteinSide 1 = ADP + phosphate + cellular proteinSide 2.. Functionally, part of the Sec protein translocase complex. Interacts with the SecYEG preprotein conducting channel. Has a central role in coupling the hydrolysis of ATP to the transfer of proteins into and across the cell membrane, serving as an ATP-driven molecular motor driving the stepwise translocation of polypeptide chains across the membrane. The sequence is that of Protein translocase subunit SecA from Parabacteroides distasonis (strain ATCC 8503 / DSM 20701 / CIP 104284 / JCM 5825 / NCTC 11152).